Here is a 551-residue protein sequence, read N- to C-terminus: Cilia- and flagella-associated protein 45 (551 aa).

2 disordered regions span residues M1 to V30 and R461 to E489. Positions N157–R526 form a coiled coil.

This sequence belongs to the CFAP45 family. Microtubule inner protein component of sperm flagellar doublet microtubules. Interacts with AK8; dimerization with AK8 may create a cavity at the interface of the dimer that can accommodate AMP. Interacts with CFAP52. Interacts with ENKUR. Directly interacts with DNALI1. Interacts with DNAH11. Interacts with DNAI1. As to expression, expressed in respiratory cells and in sperm (at protein level). Expressed in nasopharyngeal epithelium and trachea.

Its subcellular location is the cytoplasm. The protein resides in the cytoskeleton. It is found in the cilium axoneme. The protein localises to the flagellum axoneme. It localises to the cell projection. Its subcellular location is the cilium. The protein resides in the flagellum. Functionally, microtubule inner protein (MIP) part of the dynein-decorated doublet microtubules (DMTs) in cilia axoneme, which is required for motile cilia beating. It is an AMP-binding protein that may facilitate dynein ATPase-dependent ciliary and flagellar beating via adenine nucleotide homeostasis. May function as a donor of AMP to AK8 and hence promote ADP production. The protein is Cilia- and flagella-associated protein 45 of Homo sapiens (Human).